The sequence spans 332 residues: Ferredoxin--NADP reductase 1 (332 aa).

7 residues coordinate FAD: D35, K43, F48, V88, F123, D284, and T325.

It belongs to the ferredoxin--NADP reductase type 2 family. Homodimer. FAD is required as a cofactor.

The catalysed reaction is 2 reduced [2Fe-2S]-[ferredoxin] + NADP(+) + H(+) = 2 oxidized [2Fe-2S]-[ferredoxin] + NADPH. The protein is Ferredoxin--NADP reductase 1 of Listeria monocytogenes serotype 4b (strain F2365).